We begin with the raw amino-acid sequence, 180 residues long: Transcriptional repressor NrdR (180 aa).

A zinc finger lies at 3-34 (CPRCSKQEIRVLESRSAEGGQSVRRRRECMSC). One can recognise an ATP-cone domain in the interval 49–139 (IMVIKRDGSR…VYRQFQGIKD (91 aa)). The interval 155 to 180 (LERLLQDSSASDSESSGSPDLVGEYS) is disordered. The span at 160-174 (QDSSASDSESSGSPD) shows a compositional bias: low complexity.

This sequence belongs to the NrdR family. It depends on Zn(2+) as a cofactor.

In terms of biological role, negatively regulates transcription of bacterial ribonucleotide reductase nrd genes and operons by binding to NrdR-boxes. The protein is Transcriptional repressor NrdR of Synechococcus sp. (strain JA-2-3B'a(2-13)) (Cyanobacteria bacterium Yellowstone B-Prime).